The sequence spans 1368 residues: DNA-directed RNA polymerase subunit beta (1368 aa).

Belongs to the RNA polymerase beta chain family. The RNAP catalytic core consists of 2 alpha, 1 beta, 1 beta' and 1 omega subunit. When a sigma factor is associated with the core the holoenzyme is formed, which can initiate transcription.

The enzyme catalyses RNA(n) + a ribonucleoside 5'-triphosphate = RNA(n+1) + diphosphate. Functionally, DNA-dependent RNA polymerase catalyzes the transcription of DNA into RNA using the four ribonucleoside triphosphates as substrates. The polypeptide is DNA-directed RNA polymerase subunit beta (Burkholderia cenocepacia (strain ATCC BAA-245 / DSM 16553 / LMG 16656 / NCTC 13227 / J2315 / CF5610) (Burkholderia cepacia (strain J2315))).